We begin with the raw amino-acid sequence, 595 residues long: Potassium-transporting ATPase potassium-binding subunit (595 aa).

10 helical membrane passes run 9 to 29 (ICGY…YMAA), 63 to 83 (TGYA…VYAL), 135 to 155 (GLTV…VALI), 177 to 197 (ILHI…GQGV), 285 to 305 (FLEM…FGVM), 312 to 332 (GWVI…VTVL), 412 to 432 (GLYG…LMIG), 451 to 471 (AIVI…AVML), 516 to 536 (LMLG…VLAI), and 560 to 580 (FVGL…IPAL).

This sequence belongs to the KdpA family. As to quaternary structure, the system is composed of three essential subunits: KdpA, KdpB and KdpC.

The protein resides in the cell inner membrane. Its function is as follows. Part of the high-affinity ATP-driven potassium transport (or Kdp) system, which catalyzes the hydrolysis of ATP coupled with the electrogenic transport of potassium into the cytoplasm. This subunit binds the periplasmic potassium ions and delivers the ions to the membrane domain of KdpB through an intramembrane tunnel. The polypeptide is Potassium-transporting ATPase potassium-binding subunit (Methylococcus capsulatus (strain ATCC 33009 / NCIMB 11132 / Bath)).